The sequence spans 318 residues: Acetyl-coenzyme A carboxylase carboxyl transferase subunit alpha (318 aa).

Residues 38–292 (KLEKRLAKLE…NKTITKSLHA (255 aa)) form the CoA carboxyltransferase C-terminal domain.

The protein belongs to the AccA family. In terms of assembly, acetyl-CoA carboxylase is a heterohexamer composed of biotin carboxyl carrier protein (AccB), biotin carboxylase (AccC) and two subunits each of ACCase subunit alpha (AccA) and ACCase subunit beta (AccD).

It is found in the cytoplasm. It catalyses the reaction N(6)-carboxybiotinyl-L-lysyl-[protein] + acetyl-CoA = N(6)-biotinyl-L-lysyl-[protein] + malonyl-CoA. The protein operates within lipid metabolism; malonyl-CoA biosynthesis; malonyl-CoA from acetyl-CoA: step 1/1. In terms of biological role, component of the acetyl coenzyme A carboxylase (ACC) complex. First, biotin carboxylase catalyzes the carboxylation of biotin on its carrier protein (BCCP) and then the CO(2) group is transferred by the carboxyltransferase to acetyl-CoA to form malonyl-CoA. In Listeria innocua serovar 6a (strain ATCC BAA-680 / CLIP 11262), this protein is Acetyl-coenzyme A carboxylase carboxyl transferase subunit alpha.